A 140-amino-acid chain; its full sequence is Nuclear receptor 2C2-associated protein (140 aa).

Belongs to the NR2C2AP family. As to quaternary structure, interacts with NR2C2/TR4.

The protein resides in the nucleus. Functionally, may act as a repressor of NR2C2-mediated transactivation by suppressing the binding between NR2C2/TR4 and the TR4-response element in target genes. In Bos taurus (Bovine), this protein is Nuclear receptor 2C2-associated protein (NR2C2AP).